Here is a 163-residue protein sequence, read N- to C-terminus: UPF0262 protein RPD_4278 (163 aa).

This sequence belongs to the UPF0262 family.

The chain is UPF0262 protein RPD_4278 from Rhodopseudomonas palustris (strain BisB5).